The sequence spans 454 residues: UPF0210 protein BAD_1323 (454 aa).

It belongs to the UPF0210 family. In terms of assembly, homodimer.

The protein is UPF0210 protein BAD_1323 of Bifidobacterium adolescentis (strain ATCC 15703 / DSM 20083 / NCTC 11814 / E194a).